A 972-amino-acid polypeptide reads, in one-letter code: Nuclear factor NF-kappa-B p105 subunit (972 aa).

One can recognise an RHD domain in the interval 39-246 (ADGPYLQILE…DAIYDSKAPN (208 aa)). C61 carries the S-nitrosocysteine; alternate modification. C61 carries S-(15-deoxy-Delta12,14-prostaglandin J2-9-yl)cysteine; alternate lipidation. K325 is covalently cross-linked (Glycyl lysine isopeptide (Lys-Gly) (interchain with G-Cter in SUMO2)). Phosphoserine; by PKA is present on S337. A Nuclear localization signal motif is present at residues 360 to 365 (QRKRQK). Residues 372–394 (DSFGGGSGAGAGGGGMFGSGGGG) are GRR. Residues 425–473 (KSNAGMKHGTIDTPSKNDSEGCGKNVDREAVNLSGKVTEPTEQDKESSM) form a disordered region. N6-acetyllysine; by EP300 is present on residues K431 and K440. Positions 435-972 (IDTPSKNDSE…GQEGPIEGKI (538 aa)) are interaction with CFLAR. Positions 439–454 (SKNDSEGCGKNVDREA) are enriched in basic and acidic residues. ANK repeat units lie at residues 539 to 568 (NGDS…GLIS), 578 to 607 (LYQT…DLSL), 611 to 640 (LGNS…AALL), 647 to 676 (EGLN…DVNA), 681 to 711 (SGRT…HVDS), and 715 to 744 (DGTT…DPLV). The interval 647–681 (EGLNAIHIAVMSNSMPCLLLLVAAGADVNAQERKS) is essential for interaction with HIF1AN. N675 is modified ((3S)-3-hydroxyasparagine; by HIF1AN). S756 bears the Phosphoserine mark. The stretch at 768–798 (PGTTPLDMATNWQVFDILNGKPYEPEFTSDD) is one ANK 7 repeat. The region spanning 814-889 (LQLYKLLEIP…EAIEVIQAAF (76 aa)) is the Death domain. The tract at residues 894-926 (TAAPSPGKGAPQTLSLPLSSASTRSPVDEVRDD) is disordered. Positions 905–918 (QTLSLPLSSASTRS) are enriched in polar residues. S908 and S912 each carry phosphoserine; by GSK3-beta; in vitro. Position 927 is a phosphoserine (S927). A phosphoserine; by IKKB mark is found at S931 and S936. S941 is subject to Phosphoserine. Position 947 is a phosphothreonine (T947).

As to quaternary structure, component of the NF-kappa-B p65-p50 complex. Homodimer; component of the NF-kappa-B p50-p50 complex. Component of the NF-kappa-B p105-p50 complex. Component of the NF-kappa-B p50-c-Rel complex. Component of a complex consisting of the NF-kappa-B p50-p50 homodimer and BCL3. Also interacts with MAP3K8. NF-kappa-B p50 subunit interacts with NCOA3 coactivator, which may coactivate NF-kappa-B dependent expression via its histone acetyltransferase activity. Interacts with TSC22D3; this interaction prevents nuclear translocation and DNA-binding. Interacts with SPAG9 and UNC5CL. NFKB1/p105 interacts with CFLAR; the interaction inhibits p105 processing into p50. NFKB1/p105 forms a ternary complex with MAP3K8 and TNIP2. Interacts with GSK3B; the interaction prevents processing of p105 to p50. NFKB1/p50 interacts with NFKBIE. NFKB1/p50 interacts with NFKBIZ. Nuclear factor NF-kappa-B p50 subunit interacts with NFKBID. Directly interacts with MEN1. Interacts with HIF1AN. Interacts with FEM1A; interaction is direct. Post-translationally, generation of the NF-kappa-B p50 (Nuclear factor NF-kappa-B p50 subunit) transcription factor takes place both cotranslationally and post-translationally via non-mutually exclusive mechanisms. A cotranslational processing allows the production of both p50 and p105 (Nuclear factor NF-kappa-B p105 subunit) from a single NFKB1 mRNA. While translation occurs, the particular unfolded structure after the GRR repeat region acts as a substrate for the proteasome, promoting degradation of the C-terminus. The GRR acts as a proteasomal 'stop signal', protecting the region upstream of the GRR from degradation and promoting generation of p50. It is unclear if limited proteasome degradation during cotranslational processing depends on ubiquitination. NF-kappa-B p50 is also generated post-translationally following ubiquitination by the KPC complex, leading to limited processing by the proteasome downstream of the GRR region, thereby generating p50. Phosphorylation at the C-terminus by IKBKB/IKKB acts as a signal for ubiquitination and promotes either complete degradation or processing to generate the NF-kappa-B p50 (Nuclear factor NF-kappa-B p50 subunit). Phosphorylation at Ser-908 and Ser-912 primes p105 for proteolytic processing in response to TNF-alpha stimulation. Phosphorylation at Ser-927, Ser-931 and Ser-936 are required for BTRC/BTRCP-mediated ubiquitination and proteolysis. Phosphorylation at Ser-931 is also required for ubiquitination by the KPC complex and limited processing to generate NF-kappa-B p50 (Nuclear factor NF-kappa-B p50 subunit). In terms of processing, polyubiquitinated at multiple Lys residues in the C-terminus. Polyubiquitinated by the SCF(FBXW11) and SCF(BTRC) complexes following phosphorylation at Ser-923, Ser-927, Ser-931 and Ser-936, leading to its complete degradation. In contrast, polyubiquitination by the KPC complex following phosphorylation at Ser-931 leads to limited proteosomal processing and generation of the active NF-kappa-B p50 (Nuclear factor NF-kappa-B p50 subunit). Post-translationally, S-nitrosylation of Cys-61 affects DNA binding. The covalent modification of cysteine by 15-deoxy-Delta12,14-prostaglandin-J2 is autocatalytic and reversible. It may occur as an alternative to other cysteine modifications, such as S-nitrosylation and S-palmitoylation.

The protein localises to the cytoplasm. It is found in the nucleus. Its function is as follows. NF-kappa-B is a pleiotropic transcription factor present in almost all cell types and is the endpoint of a series of signal transduction events that are initiated by a vast array of stimuli related to many biological processes such as inflammation, immunity, differentiation, cell growth, tumorigenesis and apoptosis. NF-kappa-B is a homo- or heterodimeric complex formed by the Rel-like domain-containing proteins RELA/p65, RELB, NFKB1/p105, NFKB1/p50, REL and NFKB2/p52 and the heterodimeric p65-p50 complex appears to be most abundant one. The dimers bind at kappa-B sites in the DNA of their target genes and the individual dimers have distinct preferences for different kappa-B sites that they can bind with distinguishable affinity and specificity. Different dimer combinations act as transcriptional activators or repressors, respectively. NF-kappa-B is controlled by various mechanisms of post-translational modification and subcellular compartmentalization as well as by interactions with other cofactors or corepressors. NF-kappa-B complexes are held in the cytoplasm in an inactive state complexed with members of the NF-kappa-B inhibitor (I-kappa-B) family. In a conventional activation pathway, I-kappa-B is phosphorylated by I-kappa-B kinases (IKKs) in response to different activators, subsequently degraded thus liberating the active NF-kappa-B complex which translocates to the nucleus. NF-kappa-B heterodimeric p65-p50 and RelB-p50 complexes are transcriptional activators. The NF-kappa-B p50-p50 homodimer is a transcriptional repressor, but can act as a transcriptional activator when associated with BCL3. NFKB1 appears to have dual functions such as cytoplasmic retention of attached NF-kappa-B proteins by p105 and generation of p50 by a cotranslational processing. The proteasome-mediated process ensures the production of both p50 and p105 and preserves their independent function, although processing of NFKB1/p105 also appears to occur post-translationally. p50 binds to the kappa-B consensus sequence 5'-GGRNNYYCC-3', located in the enhancer region of genes involved in immune response and acute phase reactions. In a complex with MAP3K8, NFKB1/p105 represses MAP3K8-induced MAPK signaling; active MAP3K8 is released by proteasome-dependent degradation of NFKB1/p105. P105 is the precursor of the active p50 subunit (Nuclear factor NF-kappa-B p50 subunit) of the nuclear factor NF-kappa-B. Acts as a cytoplasmic retention of attached NF-kappa-B proteins by p105. Functionally, constitutes the active form, which associates with RELA/p65 to form the NF-kappa-B p65-p50 complex to form a transcription factor. Together with RELA/p65, binds to the kappa-B consensus sequence 5'-GGRNNYYCC-3', located in the enhancer region of genes involved in immune response and acute phase reactions. This is Nuclear factor NF-kappa-B p105 subunit (NFKB1) from Canis lupus familiaris (Dog).